A 111-amino-acid chain; its full sequence is Parvalbumin alpha (111 aa).

N-acetylthreonine; in form C2 is present on Thr-1. 2 consecutive EF-hand domains span residues 40 to 75 and 79 to 111; these read KPDDTLKEVFGILDQDKSGYIEEEELKFVLKGFAAG and LTANETKALLKAGDQDGDDKIGVDEFTNLVKAA. Residues Asp-53, Asp-55, Ser-57, Tyr-59, Glu-61, Glu-64, Asp-92, Asp-94, Asp-96, Lys-98, and Glu-103 each coordinate Ca(2+).

This sequence belongs to the parvalbumin family. In terms of processing, acetylation of Thr-1 converts C1 to C2.

In terms of biological role, in muscle, parvalbumin is thought to be involved in relaxation after contraction. It binds two calcium ions. The polypeptide is Parvalbumin alpha (Latimeria chalumnae (Coelacanth)).